The sequence spans 326 residues: Phenylalanine--tRNA ligase alpha subunit (326 aa).

Mg(2+) is bound at residue Glu251.

It belongs to the class-II aminoacyl-tRNA synthetase family. Phe-tRNA synthetase alpha subunit type 1 subfamily. As to quaternary structure, tetramer of two alpha and two beta subunits. It depends on Mg(2+) as a cofactor.

The protein resides in the cytoplasm. The catalysed reaction is tRNA(Phe) + L-phenylalanine + ATP = L-phenylalanyl-tRNA(Phe) + AMP + diphosphate + H(+). The polypeptide is Phenylalanine--tRNA ligase alpha subunit (Idiomarina loihiensis (strain ATCC BAA-735 / DSM 15497 / L2-TR)).